The primary structure comprises 306 residues: Recombination-associated protein RdgC (306 aa).

Belongs to the RdgC family.

It is found in the cytoplasm. The protein localises to the nucleoid. Its function is as follows. May be involved in recombination. This is Recombination-associated protein RdgC from Pseudomonas aeruginosa (strain LESB58).